The primary structure comprises 454 residues: Bifunctional protein GlmU (454 aa).

The segment at 1-226 (MSLEIVILAA…AMEVQGVNDR (226 aa)) is pyrophosphorylase. UDP-N-acetyl-alpha-D-glucosamine is bound by residues 8–11 (LAAG), Lys22, Gln73, 78–79 (GT), 99–101 (YGD), Gly136, Glu151, Asn166, and Asn224. Position 101 (Asp101) interacts with Mg(2+). Asn224 is a Mg(2+) binding site. The linker stretch occupies residues 227-247 (MQQAQLERHYQRLRAEELMRQ). The tract at residues 248–454 (GVTLLDPQRL…NWKRPEKIKK (207 aa)) is N-acetyltransferase. The UDP-N-acetyl-alpha-D-glucosamine site is built by Arg330 and Lys348. The active-site Proton acceptor is His360. Residues Tyr363 and Asn374 each coordinate UDP-N-acetyl-alpha-D-glucosamine. Acetyl-CoA contacts are provided by residues Ala377, 383–384 (NY), Ser402, Ala420, and Arg437.

The protein in the N-terminal section; belongs to the N-acetylglucosamine-1-phosphate uridyltransferase family. This sequence in the C-terminal section; belongs to the transferase hexapeptide repeat family. As to quaternary structure, homotrimer. Mg(2+) serves as cofactor.

Its subcellular location is the cytoplasm. It catalyses the reaction alpha-D-glucosamine 1-phosphate + acetyl-CoA = N-acetyl-alpha-D-glucosamine 1-phosphate + CoA + H(+). It carries out the reaction N-acetyl-alpha-D-glucosamine 1-phosphate + UTP + H(+) = UDP-N-acetyl-alpha-D-glucosamine + diphosphate. Its pathway is nucleotide-sugar biosynthesis; UDP-N-acetyl-alpha-D-glucosamine biosynthesis; N-acetyl-alpha-D-glucosamine 1-phosphate from alpha-D-glucosamine 6-phosphate (route II): step 2/2. It participates in nucleotide-sugar biosynthesis; UDP-N-acetyl-alpha-D-glucosamine biosynthesis; UDP-N-acetyl-alpha-D-glucosamine from N-acetyl-alpha-D-glucosamine 1-phosphate: step 1/1. It functions in the pathway bacterial outer membrane biogenesis; LPS lipid A biosynthesis. Functionally, catalyzes the last two sequential reactions in the de novo biosynthetic pathway for UDP-N-acetylglucosamine (UDP-GlcNAc). The C-terminal domain catalyzes the transfer of acetyl group from acetyl coenzyme A to glucosamine-1-phosphate (GlcN-1-P) to produce N-acetylglucosamine-1-phosphate (GlcNAc-1-P), which is converted into UDP-GlcNAc by the transfer of uridine 5-monophosphate (from uridine 5-triphosphate), a reaction catalyzed by the N-terminal domain. The chain is Bifunctional protein GlmU from Pseudomonas aeruginosa (strain ATCC 15692 / DSM 22644 / CIP 104116 / JCM 14847 / LMG 12228 / 1C / PRS 101 / PAO1).